Reading from the N-terminus, the 483-residue chain is tRNA sulfurtransferase (483 aa).

Residues 61–165 (EAVCDALTRI…DDKLILVNAR (105 aa)) form the THUMP domain. Residues 183–184 (LI), K265, G287, and Q296 each bind ATP. C344 and C456 are oxidised to a cystine. In terms of domain architecture, Rhodanese spans 404-483 (FATNDVVLDI…FNNVKVYRKK (80 aa)). The active-site Cysteine persulfide intermediate is C456.

This sequence belongs to the ThiI family.

The protein resides in the cytoplasm. The enzyme catalyses [ThiI sulfur-carrier protein]-S-sulfanyl-L-cysteine + a uridine in tRNA + 2 reduced [2Fe-2S]-[ferredoxin] + ATP + H(+) = [ThiI sulfur-carrier protein]-L-cysteine + a 4-thiouridine in tRNA + 2 oxidized [2Fe-2S]-[ferredoxin] + AMP + diphosphate. The catalysed reaction is [ThiS sulfur-carrier protein]-C-terminal Gly-Gly-AMP + S-sulfanyl-L-cysteinyl-[cysteine desulfurase] + AH2 = [ThiS sulfur-carrier protein]-C-terminal-Gly-aminoethanethioate + L-cysteinyl-[cysteine desulfurase] + A + AMP + 2 H(+). It participates in cofactor biosynthesis; thiamine diphosphate biosynthesis. In terms of biological role, catalyzes the ATP-dependent transfer of a sulfur to tRNA to produce 4-thiouridine in position 8 of tRNAs, which functions as a near-UV photosensor. Also catalyzes the transfer of sulfur to the sulfur carrier protein ThiS, forming ThiS-thiocarboxylate. This is a step in the synthesis of thiazole, in the thiamine biosynthesis pathway. The sulfur is donated as persulfide by IscS. In Proteus mirabilis (strain HI4320), this protein is tRNA sulfurtransferase.